We begin with the raw amino-acid sequence, 235 residues long: Elongation factor Tu, chloroplastic (235 aa).

Positions 1 to 125 constitute a tr-type G domain; sequence KNMITGAAQM…EVDNYIPLPT (125 aa). 47–50 serves as a coordination point for GTP; it reads NKAD.

Belongs to the TRAFAC class translation factor GTPase superfamily. Classic translation factor GTPase family. EF-Tu/EF-1A subfamily.

The protein resides in the plastid. It localises to the chloroplast. It catalyses the reaction GTP + H2O = GDP + phosphate + H(+). Functionally, GTP hydrolase that promotes the GTP-dependent binding of aminoacyl-tRNA to the A-site of ribosomes during protein biosynthesis. The sequence is that of Elongation factor Tu, chloroplastic (tufA) from Bryopsis plumosa (Green alga).